The chain runs to 49 residues: Osteocalcin (49 aa).

In terms of domain architecture, Gla spans 1–47 (YLDHWLGAPAPYPDPLEPRREVCELNPDCDELADHIGFQEAYRRFYG). P9 is modified (hydroxyproline). Ca(2+)-binding residues include E17, E21, E24, and D30. Residues E17, E21, and E24 each carry the 4-carboxyglutamate modification. A disulfide bridge links C23 with C29.

This sequence belongs to the osteocalcin/matrix Gla protein family. Post-translationally, gamma-carboxyglutamate residues are formed by vitamin K dependent carboxylation by GGCX. These residues are essential for the binding of calcium. Decarboxylation promotes the hormone activity.

The protein resides in the secreted. Its function is as follows. The carboxylated form is one of the main organic components of the bone matrix, which constitutes 1-2% of the total bone protein. It acts as a negative regulator of bone formation and is required to limit bone formation without impairing bone resorption or mineralization. The carboxylated form binds strongly to apatite and calcium. Functionally, the uncarboxylated form acts as a hormone secreted by osteoblasts, which regulates different cellular processes, such as energy metabolism, male fertility and brain development. Regulates of energy metabolism by acting as a hormone favoring pancreatic beta-cell proliferation, insulin secretion and sensitivity and energy expenditure. Uncarboxylated osteocalcin hormone also promotes testosterone production in the testes: acts as a ligand for G protein-coupled receptor GPRC6A at the surface of Leydig cells, initiating a signaling response that promotes the expression of enzymes required for testosterone synthesis in a CREB-dependent manner. Also acts as a regulator of brain development: osteocalcin hormone crosses the blood-brain barrier and acts as a ligand for GPR158 on neurons, initiating a signaling response that prevents neuronal apoptosis in the hippocampus, favors the synthesis of all monoamine neurotransmitters and inhibits that of gamma-aminobutyric acid (GABA). Osteocalcin also crosses the placenta during pregnancy and maternal osteocalcin is required for fetal brain development. This is Osteocalcin (BGLAP) from Equus caballus (Horse).